The primary structure comprises 60 residues: Protein translocase subunit SecE (60 aa).

A helical membrane pass occupies residues L37–L57.

It belongs to the SecE/SEC61-gamma family. Component of the Sec protein translocase complex. Heterotrimer consisting of SecY (alpha), SecG (beta) and SecE (gamma) subunits. The heterotrimers can form oligomers, although 1 heterotrimer is thought to be able to translocate proteins. Interacts with the ribosome. May interact with SecDF, and other proteins may be involved.

The protein resides in the cell membrane. Its function is as follows. Essential subunit of the Sec protein translocation channel SecYEG. Clamps together the 2 halves of SecY. May contact the channel plug during translocation. This is Protein translocase subunit SecE from Aeropyrum pernix (strain ATCC 700893 / DSM 11879 / JCM 9820 / NBRC 100138 / K1).